A 62-amino-acid chain; its full sequence is Kininogen-1 (62 aa).

The signal sequence occupies residues 1-22 (MDILKKSLFLVLFLGLVSFSIC). Residues 24 to 62 (EEKRDTEEEENDDEIEEESEEKKREAPERPPGFTPFRIY) form a disordered region. A compositionally biased stretch (acidic residues) spans 30 to 42 (EEEENDDEIEEES). Pro54 carries the post-translational modification 4-hydroxyproline; partial. The residue at position 62 (Tyr62) is a Sulfotyrosine.

Belongs to the frog skin active peptide (FSAP) family. Bradykinin-related peptide subfamily. As to expression, expressed by the skin glands.

It is found in the secreted. Its function is as follows. Inhibits ACE with a Ki of 1.6 uM, and targets B2 bradykinin receptor (BDKRB2). Provokes contraction of smooth muscle preparation (ileum). In vivo, induces an early hyperalgesic effects in living rats after intraplantar injection. This Phyllomedusa sauvagei (Sauvage's leaf frog) protein is Kininogen-1.